The primary structure comprises 131 residues: Profilin-1 (131 aa).

The protein belongs to the profilin family. In terms of assembly, occurs in many kinds of cells as a complex with monomeric actin in a 1:1 ratio. Expressed at low levels roots, leaves, stems, flowers and siliques. Expressed in leaf epidermal cells, trichomes and stem epidermal cells. Detected in phloem exudates (at protein level).

It is found in the cytoplasm. Its subcellular location is the cytoskeleton. Its function is as follows. Binds to actin monomers and regulates the organization of the actin cytoskeleton. At high concentrations, profilin prevents the polymerization of actin, whereas it enhances it at low concentrations. At low concentrations, associates with the poly-proline motif of formins to enhance actin filament elongation rate. Binds ACT1, ACT7 and ACT11 and inhibits actin polymerization. Coordinates the stochastic dynamic properties of actin filaments by modulating formin-mediated actin nucleation and assembly during axial cell expansion. Binds G-actin and poly-L-proline in vitro. Inhibits cell growth of various pathogenic fungal strains. May play a role as antifungal proteins in the defense system against fungal pathogen attacks. This chain is Profilin-1, found in Arabidopsis thaliana (Mouse-ear cress).